Consider the following 225-residue polypeptide: Nuclear protein UL4 homolog (225 aa).

This sequence belongs to the alphaherpesvirinae HHV-1 UL4 family.

The protein resides in the host nucleus. This chain is Nuclear protein UL4 homolog, found in Equus caballus (Horse).